A 610-amino-acid polypeptide reads, in one-letter code: Elongation factor 4 (610 aa).

Residues 12-194 form the tr-type G domain; sequence EKIRNFSIIA…QIVEKVPAPQ (183 aa). GTP-binding positions include 24 to 29 and 141 to 144; these read DHGKST and NKID.

The protein belongs to the TRAFAC class translation factor GTPase superfamily. Classic translation factor GTPase family. LepA subfamily.

The protein resides in the cell membrane. The catalysed reaction is GTP + H2O = GDP + phosphate + H(+). Functionally, required for accurate and efficient protein synthesis under certain stress conditions. May act as a fidelity factor of the translation reaction, by catalyzing a one-codon backward translocation of tRNAs on improperly translocated ribosomes. Back-translocation proceeds from a post-translocation (POST) complex to a pre-translocation (PRE) complex, thus giving elongation factor G a second chance to translocate the tRNAs correctly. Binds to ribosomes in a GTP-dependent manner. This Streptococcus thermophilus (strain ATCC BAA-250 / LMG 18311) protein is Elongation factor 4.